A 3010-amino-acid polypeptide reads, in one-letter code: Genome polyprotein (3010 aa).

Residue Ser-2 is modified to N-acetylserine; by host. Residues 2-23 (STNPKPQRKTKRNTNRRPQDVK) are interaction with STAT1. The interval 2 to 58 (STNPKPQRKTKRNTNRRPQDVKFPGGGQIVGGVYLLPRRGPRLGVRATRKASERSQP) is interaction with EIF2AK2/PKR. The interaction with DDX3X stretch occupies residues 2-59 (STNPKPQRKTKRNTNRRPQDVKFPGGGQIVGGVYLLPRRGPRLGVRATRKASERSQPR). The tract at residues 2 to 75 (STNPKPQRKT…PKARRPEGRA (74 aa)) is disordered. Residues 2 to 168 (STNPKPQRKT…EDGVNYATGN (167 aa)) are Cytoplasmic-facing. Short sequence motifs (nuclear localization signal) lie at residues 5–13 (PKPQRKTKR) and 38–43 (PRRGPR). Basic residues predominate over residues 7–16 (PQRKTKRNTN). Over residues 32 to 47 (GGVYLLPRRGPRLGVR) the composition is skewed to low complexity. Ser-53 is subject to Phosphoserine; by host. 2 consecutive short sequence motifs (nuclear localization signal) follow at residues 58-64 (PRGRRQP) and 66-71 (PKARRP). Positions 58–68 (PRGRRQPIPKA) are enriched in basic residues. Ser-99 is modified (phosphoserine; by host). The tract at residues 112–152 (PRRRSRNLGKVIDTLTCGFADLMGYIPLVGAPLGGAARALA) is important for endoplasmic reticulum and mitochondrial localization. The residue at position 116 (Ser-116) is a Phosphoserine; by host PKA. Positions 122–173 (VIDTLTCGFADLMGYIPLVGAPLGGAARALAHGVRVLEDGVNYATGNLPGCS) are interaction with APOA2. An important for lipid droplets localization region spans residues 164–167 (YATG). Residues 169-189 (LPGCSFSIFLLALLSCLTIPA) form a helical membrane-spanning segment. Residues 178-191 (LLALLSCLTIPASA) constitute a propeptide, ER anchor for the core protein, removed in mature form by host signal peptidase. Over 190–358 (SAYEVRNVSG…AGAHWGVLAG (169 aa)) the chain is Lumenal. 4 N-linked (GlcNAc...) asparagine; by host glycosylation sites follow: Asn-196, Asn-209, Asn-234, and Asn-250. The tract at residues 265-296 (LVGTAAFCSAMYVGDLCGSIFLVSQLFTFSPR) is important for fusion. Asn-305 is a glycosylation site (N-linked (GlcNAc...) asparagine; by host). The chain crosses the membrane as a helical span at residues 359 to 379 (LAYYSMVGNWAKVLIVALLFA). The Lumenal segment spans residues 380–725 (GVDGETHTTG…WEYILLLFLL (346 aa)). The HVR1 stretch occupies residues 385-411 (THTTGRVAGHTTSGFTSLFSSGASQKI). N-linked (GlcNAc...) (high mannose) asparagine; by host glycans are attached at residues Asn-417, Asn-423, Asn-430, and Asn-448. 4 cysteine pairs are disulfide-bonded: Cys-429-Cys-552, Cys-452-Cys-459, Cys-486-Cys-494, and Cys-503-Cys-508. Residues 474–479 (YTKPNS) form an HVR2 region. Residue Asn-478 is glycosylated (N-linked (GlcNAc...) asparagine; by host). Residues 480-493 (SDQRPYCWHYAPRP) form a CD81-binding 1 region. The N-linked (GlcNAc...) (high mannose) asparagine; by host glycan is linked to Asn-532. Residue Asn-540 is glycosylated (N-linked (GlcNAc...) asparagine; by host). The CD81-binding 2 stretch occupies residues 544 to 551 (PPQGNWFG). Asn-556 carries N-linked (GlcNAc...) (high mannose) asparagine; by host glycosylation. Cys-564 and Cys-569 are oxidised to a cystine. Residue Asn-576 is glycosylated (N-linked (GlcNAc...) (high mannose) asparagine; by host). Intrachain disulfides connect Cys-581/Cys-585, Cys-597/Cys-620, and Cys-607/Cys-644. N-linked (GlcNAc...) (high mannose) asparagine; by host glycosylation is found at Asn-623 and Asn-645. A disulfide bridge connects residues Cys-652 and Cys-677. The PKR/eIF2-alpha phosphorylation homology domain (PePHD) stretch occupies residues 660 to 671 (SELSPLLLSTTE). Residues 726-746 (LADARVCACLWMMLLIAQAEA) form a helical membrane-spanning segment. Over 747-757 (ALENLVVLNAA) the chain is Lumenal. The chain crosses the membrane as a helical span at residues 758-778 (SVAGAHGILSFLVFFCAAWYI). Residues 779–781 (KGR) lie on the Cytoplasmic side of the membrane. A helical membrane pass occupies residues 782-803 (LAPGAAYAFYGVWPLLLLLLAL). At 804–813 (PPRAYALDRE) the chain is on the lumenal side. The chain crosses the membrane as a helical span at residues 814 to 834 (MAASCGGAVLVGLVFLTLSPY). At 835–838 (YKVF) the chain is on the cytoplasmic side. Residues 839-859 (LTRLIWWLQYFITRAEAHMQV) traverse the membrane as a helical segment. Topologically, residues 860-881 (WVPPLNVRGGRDAIILLTCAVH) are lumenal. A helical transmembrane segment spans residues 882-902 (PELIFDITKLLLAILGPLMVL). In terms of domain architecture, Peptidase C18 spans 903–1026 (QAGITRVPYF…SLEGQGWRLL (124 aa)). The Cytoplasmic segment spans residues 903–1657 (QAGITRVPYF…CMSADLEVVT (755 aa)). The protease NS2-3 stretch occupies residues 904 to 1206 (AGITRVPYFV…PVESMETTMR (303 aa)). The S-palmitoyl cysteine; by host moiety is linked to residue Cys-922. The interval 929-949 (AGGHYVQMAFMKLGALTGTYV) is interaction with host SCPS1. Residues His-952, Glu-972, and Cys-993 each act as for protease NS2 activity; shared with dimeric partner in the active site. The 182-residue stretch at 1027–1208 (APITAYSQQT…ESMETTMRSP (182 aa)) folds into the Peptidase S29 domain. Active-site charge relay system; for serine protease NS3 activity residues include His-1083 and Asp-1107. Cys-1123 and Cys-1125 together coordinate Zn(2+). Catalysis depends on Ser-1165, which acts as the Charge relay system; for serine protease NS3 activity. Residues Cys-1171 and His-1175 each contribute to the Zn(2+) site. Residues 1217 to 1369 (PAVPQTFQVA…PNIEEIGLSN (153 aa)) enclose the Helicase ATP-binding domain. An ATP-binding site is contributed by 1230–1237 (APTGSGKS). The Mg(2+) site is built by Ser-1237 and Glu-1317. The DECH box signature appears at 1316-1319 (DECH). The RNA-binding stretch occupies residues 1486-1497 (QRRGRTGRGRSG). Residues 1658–1678 (STWVLVGGVLAALAAYCLTTG) traverse the membrane as a helical segment. Positions 1679–1690 (SVVIVGRIILSG) are NS3-binding. The Cytoplasmic portion of the chain corresponds to 1679 to 1805 (SVVIVGRIIL…SITSPLTTQN (127 aa)). Residues 1806-1824 (TLLFNILGGWVAAQLAPPS) form a helical membrane-spanning segment. The Lumenal portion of the chain corresponds to 1825–1828 (AASA). Residues 1829 to 1849 (FVGAGIAGAAVGSIGLGKVLV) traverse the membrane as a helical segment. Asp-1850 is a topological domain (cytoplasmic). The chain crosses the membrane as a helical span at residues 1851 to 1871 (ILAGYGAGVAGALVAFKVMSG). Residues 1872–1881 (EVPSTEDLVN) lie on the Lumenal side of the membrane. Residues 1882 to 1902 (LLPAILSPGALVVGVVCAAIL) traverse the membrane as a helical segment. The Cytoplasmic segment spans residues 1903–1972 (RRHVGPGEGA…WINEDCSTPC (70 aa)). S-palmitoyl cysteine; by host attachment occurs at residues Cys-1968 and Cys-1972. An intramembrane segment occupies 1973 to 2002 (SGSWLRDVWDWICTVLTDFKTWLQSKLLPR). The Cytoplasmic segment spans residues 2003 to 2989 (LPGVPFLSCQ…YHSLSRARPR (987 aa)). Residues Cys-2011, Cys-2029, Cys-2031, and Cys-2052 each coordinate Zn(2+). Residues 2120–2208 (EFFTEVDGVR…ASSSASQLSA (89 aa)) form an FKBP8-binding region. Residues 2120–2332 (EFFTEVDGVR…PIPPPRRKRT (213 aa)) are transcriptional activation. Residues 2135 to 2139 (PACKP) are interaction with non-structural protein 4A. The segment at 2187–2219 (KRRLARGSPPSLASSSASQLSAPSLKATCTTHH) is disordered. The tract at residues 2189–2441 (RLARGSPPSL…PCAAEESKLP (253 aa)) is interaction with host SKP2. Residue Ser-2194 is modified to Phosphoserine; by host; in p56. Residues 2194–2211 (SPPSLASSSASQLSAPSL) show a composition bias toward low complexity. Phosphoserine; by host; in p58 is present on residues Ser-2197, Ser-2201, Ser-2204, Ser-2207, and Ser-2210. The ISDR stretch occupies residues 2210 to 2249 (SLKATCTTHHDSPDADLIEANLLWRQEMGGNITRVESENK). Residues 2210–2275 (SLKATCTTHH…REISVAAEIL (66 aa)) form an interaction with EIF2AK2/PKR region. An NS4B-binding region spans residues 2249 to 2306 (KVVILDSFEPLHAEGDEREISVAAEILRKSRKFPSALPIWARPDYNPPLLESWKDPDY). Residues 2322–2325 (PPIP) carry the SH3-binding motif. The Nuclear localization signal signature appears at 2326–2334 (PPRRKRTVV). Lys-2350 is covalently cross-linked (Glycyl lysine isopeptide (Lys-Gly) (interchain with G-Cter in ubiquitin)). Residues 2351 to 2365 (TFGSSGSSAVDSGTA) show a composition bias toward polar residues. The disordered stretch occupies residues 2351–2407 (TFGSSGSSAVDSGTATALPDLASDDGDKGSDVESYSSMPPLEGEPGDPDLSDGSWST). The interval 2354–2377 (SSGSSAVDSGTATALPDLASDDGD) is V3. Residues Ser-2448 and Ser-2461 each carry the phosphoserine; by host modification. The region spanning 2633 to 2751 (PMGFSYDTRC…ICESAGTQED (119 aa)) is the RdRp catalytic domain. Residues Asp-2639, Asp-2737, and Asp-2738 each contribute to the Mg(2+) site. Residues 2990–3010 (WFPLCLLLLSVGVGIYLLPNR) form a helical membrane-spanning segment.

This sequence belongs to the hepacivirus polyprotein family. As to quaternary structure, homooligomer. Interacts with E1 (via C-terminus). Interacts with the non-structural protein 5A. Interacts (via N-terminus) with host STAT1 (via SH2 domain); this interaction results in decreased STAT1 phosphorylation and ubiquitin-mediated proteasome-dependent STAT1 degradation, leading to decreased IFN-stimulated gene transcription. Interacts with host STAT3; this interaction constitutively activates STAT3. Interacts with host LTBR receptor. Interacts with host TNFRSF1A receptor and possibly induces apoptosis. Interacts with host HNRPK. Interacts with host YWHAE. Interacts with host UBE3A/E6AP. Interacts with host DDX3X. Interacts with host APOA2. Interacts with host RXRA protein. Interacts with host SP110 isoform 3/Sp110b; this interaction sequesters the transcriptional corepressor SP110 away from the nucleus. Interacts with host CREB3 nuclear transcription protein; this interaction triggers cell transformation. Interacts with host ACY3. Interacts with host C1QR1. Interacts with host RBM24; this interaction, which enhances the interaction of the mature core protein with 5'-UTR, may inhibit viral translation and favor replication. Interacts with host EIF2AK2/PKR; this interaction induces the autophosphorylation of EIF2AK2. Part of the viral assembly initiation complex composed of NS2, E1, E2, NS3, NS4A, NS5A and the mature core protein. In terms of assembly, forms a heterodimer with envelope glycoprotein E2. Interacts with mature core protein. Interacts with protease NS2. The heterodimer E1/E2 interacts with host CLDN1; this interaction plays a role in viral entry into host cell. Interacts with host SPSB2 (via C-terminus). Part of the viral assembly initiation complex composed of NS2, E1, E2, NS3, NS4A, NS5A and the mature core protein. Interacts with host NEURL3; this interaction prevents E1 binding to glycoprotein E2. Forms a heterodimer with envelope glycoprotein E1. Interacts with host CD81 and SCARB1 receptors; these interactions play a role in viral entry into host cell. Interacts with host EIF2AK2/PKR; this interaction inhibits EIF2AK2 and probably allows the virus to evade the innate immune response. Interacts with host CD209/DC-SIGN and CLEC4M/DC-SIGNR. Interact with host SPCS1; this interaction is essential for viral particle assembly. Interacts with protease NS2. The heterodimer E1/E2 interacts with host CLDN1; this interaction plays a role in viral entry into host cell. Part of the viral assembly initiation complex composed of NS2, E1, E2, NS3, NS4A, NS5A and the mature core protein. Interacts with host SLC3A2/4F2hc; the interaction may facilitate viral entry into host cell. Interacts with human PLSCR1. As to quaternary structure, homohexamer. Homoheptamer. Interacts with protease NS2. In terms of assembly, homodimer. Interacts with host SPCS1; this interaction is essential for viral particle assembly. Interacts with envelope glycoprotein E1. Interacts with envelope glycoprotein E2. Interacts with viroporin p7. Interacts with serine protease/helicase NS3. Part of the replication complex composed of NS2, NS3, NS4A, NS4B, NS5A and the RNA-directed RNA polymerase embedded in an ER-derived membranous web. Part of the viral assembly initiation complex composed of NS2, E1, E2, NS3, NS4A, NS5A and the mature core protein. Interacts with protease NS2. Interacts with non-structural protein 4A; this interaction stabilizes the folding of NS3 serine protease. NS3-NS4A interaction is essential for NS3 activation and allows membrane anchorage of the latter. NS3/NS4A complex also prevents phosphorylation of host IRF3, thus preventing the establishment of dsRNA induced antiviral state. Interacts with host MAVS; this interaction leads to the cleavage and inhibition of host MAVS. Interacts with host TICAM1; this interaction leads to the cleavage and inhibition of host TICAM1. Interacts with host TANK-binding kinase/TBK1; this interaction results in the inhibition of the association between TBK1 and IRF3, which leads to the inhibition of IRF3 activation. Interacts with host RBM24. Part of the replication complex composed of NS2, NS3, NS4A, NS4B, NS5A and the RNA-directed RNA polymerase embedded in an ER-derived membranous web. Part of the viral assembly initiation complex composed of NS2, E1, E2, NS3, NS4A, NS5A and the mature core protein. As to quaternary structure, interacts with NS3 serine protease; this interaction stabilizes the folding of NS3 serine protease. NS3-NS4A interaction is essential for NS3 activation and allows membrane anchorage of the latter. Interacts with non-structural protein 5A (via N-terminus). Part of the replication complex composed of NS2, NS3, NS4A, NS4B, NS5A and the RNA-directed RNA polymerase embedded in an ER-derived membranous web. Part of the viral assembly initiation complex composed of NS2, E1, E2, NS3, NS4A, NS5A and the mature core protein. In terms of assembly, homomultimer. Interacts with non-structural protein NS5A. Interacts with host PLA2G4C; this interaction likely initiates the recruitment of replication complexes to lipid droplets. Interacts with host STING; this interaction disrupts the interaction between STING and TBK1 thereby suppressing the interferon signaling. Part of the replication complex composed of NS2, NS3, NS4A, NS4B, NS5A and the RNA-directed RNA polymerase embedded in an ER-derived membranous web. Monomer. Homodimer; dimerization is required for RNA-binding. Interacts with the mature core protein. Interacts (via N-terminus) with non-structural protein 4A. Interacts with non-structural protein 4B. Interacts (via region D2) with RNA-directed RNA polymerase. Part of the viral assembly initiation complex composed of NS2, E1, E2, NS3, NS4A, NS5A and the mature core protein. Part of the replication complex composed of NS2, NS3, NS4A, NS4B, NS5A and the RNA-directed RNA polymerase embedded in an ER-derived membranous web. Interacts with host GRB2. Interacts with host BIN1. Interacts with host PIK3R1. Interacts with host SRCAP. Interacts with host FKBP8. Interacts (via C-terminus) with host VAPB (via MSP domain). Interacts with host EIF2AK2/PKR; this interaction leads to disruption of EIF2AK2 dimerization by NS5A and probably allows the virus to evade the innate immune response. Interacts (via N-terminus) with host PACSIN2 (via N-terminus); this interaction attenuates protein kinase C alpha-mediated phosphorylation of PACSIN2 by disrupting the interaction between PACSIN2 and PRKCA. Interacts (via N-terminus) with host SRC kinase (via SH2 domain). Interacts with most Src-family kinases. Interacts with host IFI27 and SKP2; promotes the ubiquitin-mediated proteasomal degradation of NS5A. Interacts with host GPS2. Interacts with host TNFRSF21; this interaction allows the modulation by the virus of JNK, p38 MAPK, STAT3, and Akt signaling pathways in a DR6-dependent manner. Interacts (via N-terminus) with host CIDEB (via N-terminus); this interaction seems to regulate the association of HCV particles with APOE. Interacts with host CHKA/Choline Kinase-alpha; CHKA bridges host PI4KA and NS5A and potentiates NS5A-stimulated PI4KA activity, which then facilitates the targeting of the ternary complex to the ER for viral replication. Interacts with host SPSB2 (via C-terminus); this interaction targets NS5A for ubiquitination and degradation. Interacts with host RAB18; this interaction may promote the association of NS5A and other replicase components with lipid droplets. Interacts (via region D2) with host PPIA/CYPA; the interaction stimulates RNA-binding ability of NS5A and is dependent on the peptidyl-prolyl cis-trans isomerase activity of PPIA/CYPA. Interacts with host TRIM14; this interaction induces the degradation of NS5A. As to quaternary structure, homooligomer. Interacts with non-structural protein 5A. Interacts with host VAPB. Interacts with host PRK2/PKN2. Interacts with host HNRNPA1 and SEPT6; these interactions facilitate viral replication. Part of the replication complex composed of NS2, NS3, NS4A, NS4B, NS5A and the RNA-directed RNA polymerase. Requires Zn(2+) as cofactor. Mg(2+) serves as cofactor. Specific enzymatic cleavages in vivo yield mature proteins. The structural proteins, core, E1, E2 and p7 are produced by proteolytic processing by host signal peptidases. The core protein precursor is synthesized as a 23 kDa, which is retained in the ER membrane through the hydrophobic signal peptide. Cleavage by the signal peptidase releases the 21 kDa mature core protein. The cleavage of the core protein precursor occurs between aminoacids 176 and 188 but the exact cleavage site is not known. Some degraded forms of the core protein appear as well during the course of infection. The other proteins (p7, NS2, NS3, NS4A, NS4B, NS5A and NS5B) are cleaved by the viral proteases. Autoprocessing between NS2 and NS3 is mediated by the NS2 cysteine protease catalytic domain and regulated by the NS3 N-terminal domain. In terms of processing, phosphorylated by host PKC and PKA. Post-translationally, ubiquitinated; mediated by UBE3A and leading to core protein subsequent proteasomal degradation. Highly N-glycosylated. In terms of processing, palmitoylation is required for NS2/3 autoprocessing and E2 recruitment to membranes. Post-translationally, palmitoylated. This modification may play a role in its polymerization or in protein-protein interactions. Phosphorylated on serines in a basal form termed p56. p58 is a hyperphosphorylated form of p56. p56 and p58 coexist in the cell in roughly equivalent amounts. Hyperphosphorylation is dependent on the presence of NS4A. Host CSNK1A1/CKI-alpha or RPS6KB1 kinases may be responsible for NS5A phosphorylation. In terms of processing, tyrosine phosphorylation is essential for the interaction with host SRC. Post-translationally, the N-terminus is phosphorylated by host PRK2/PKN2.

Its subcellular location is the host endoplasmic reticulum membrane. The protein resides in the host mitochondrion membrane. The protein localises to the virion. It is found in the host cytoplasm. It localises to the host nucleus. Its subcellular location is the host lipid droplet. The protein resides in the virion membrane. The protein localises to the host mitochondrion. It is found in the host cell membrane. It localises to the host perinuclear region. The catalysed reaction is Hydrolysis of four peptide bonds in the viral precursor polyprotein, commonly with Asp or Glu in the P6 position, Cys or Thr in P1 and Ser or Ala in P1'.. The enzyme catalyses a ribonucleoside 5'-triphosphate + H2O = a ribonucleoside 5'-diphosphate + phosphate + H(+). It carries out the reaction ATP + H2O = ADP + phosphate + H(+). It catalyses the reaction RNA(n) + a ribonucleoside 5'-triphosphate = RNA(n+1) + diphosphate. Inhibited by the antiviral drug hexamethylene amiloride. Inhibited by amantadine. Inhibition by amantadine appears to be genotype-dependent. Also inhibited by long-alkyl-chain iminosugar derivatives. With respect to regulation, activity is up-regulated by PRK2/PKN2-mediated phosphorylation. Packages viral RNA to form a viral nucleocapsid, and promotes virion budding. Participates in the viral particle production as a result of its interaction with the non-structural protein 5A. Binds RNA and may function as a RNA chaperone to induce the RNA structural rearrangements taking place during virus replication. Modulates viral translation initiation by interacting with viral IRES and 40S ribosomal subunit. Affects various cell signaling pathways, host immunity and lipid metabolism. Prevents the establishment of cellular antiviral state by blocking the interferon-alpha/beta (IFN-alpha/beta) and IFN-gamma signaling pathways and by blocking the formation of phosphorylated STAT1 and promoting ubiquitin-mediated proteasome-dependent degradation of STAT1. Activates STAT3 leading to cellular transformation. Regulates the activity of cellular genes, including c-myc and c-fos. May repress the promoter of p53, and sequester CREB3 and SP110 isoform 3/Sp110b in the cytoplasm. Represses cell cycle negative regulating factor CDKN1A, thereby interrupting an important check point of normal cell cycle regulation. Targets transcription factors involved in the regulation of inflammatory responses and in the immune response: suppresses TNF-induced NF-kappa-B activation, and activates AP-1. Binds to dendritic cells (DCs) via C1QR1, resulting in down-regulation of T-lymphocytes proliferation. Alters lipid metabolism by interacting with hepatocellular proteins involved in lipid accumulation and storage. Induces up-regulation of FAS promoter activity, and thereby contributes to the increased triglyceride accumulation in hepatocytes (steatosis). Its function is as follows. Forms a heterodimer with envelope glycoprotein E2, which mediates virus attachment to the host cell, virion internalization through clathrin-dependent endocytosis and fusion with host membrane. Fusion with the host cell is most likely mediated by both E1 and E2, through conformational rearrangements of the heterodimer required for fusion rather than a classical class II fusion mechanism. E1/E2 heterodimer binds host apolipoproteins such as APOB and APOE thereby forming a lipo-viro-particle (LVP). APOE associated to the LVP allows the initial virus attachment to cell surface receptors such as the heparan sulfate proteoglycans (HSPGs), syndecan-1 (SDC1), syndecan-1 (SDC2), the low-density lipoprotein receptor (LDLR) and scavenger receptor class B type I (SCARB1). The cholesterol transfer activity of SCARB1 allows E2 exposure and binding of E2 to SCARB1 and the tetraspanin CD81. E1/E2 heterodimer binding on CD81 activates the epithelial growth factor receptor (EGFR) signaling pathway. Diffusion of the complex E1-E2-EGFR-SCARB1-CD81 to the cell lateral membrane allows further interaction with Claudin 1 (CLDN1) and occludin (OCLN) to finally trigger HCV entry. Functionally, forms a heterodimer with envelope glycoprotein E1, which mediates virus attachment to the host cell, virion internalization through clathrin-dependent endocytosis and fusion with host membrane. Fusion with the host cell is most likely mediated by both E1 and E2, through conformational rearrangements of the heterodimer required for fusion rather than a classical class II fusion mechanism. The interaction between envelope glycoprotein E2 and host apolipoprotein E/APOE allows the proper assembly, maturation and infectivity of the viral particles. This interaction is probably promoted via the up-regulation of cellular autophagy by the virus. E1/E2 heterodimer binds host apolipoproteins such as APOB and APOE thereby forming a lipo-viro-particle (LVP). APOE associated to the LVP allows the initial virus attachment to cell surface receptors such as the heparan sulfate proteoglycans (HSPGs), syndecan-1 (SDC1), syndecan-1 (SDC2), the low-density lipoprotein receptor (LDLR) and scavenger receptor class B type I (SCARB1). The cholesterol transfer activity of SCARB1 allows E2 exposure and binding of E2 to SCARB1 and the tetraspanin CD81. E1/E2 heterodimer binding on CD81 activates the epithelial growth factor receptor (EGFR) signaling pathway. Diffusion of the complex E1-E2-EGFR-SCARB1-CD81 to the cell lateral membrane allows further interaction with Claudin 1 (CLDN1) and occludin (OCLN) to finally trigger HCV entry. Inhibits host EIF2AK2/PKR activation, preventing the establishment of an antiviral state. Viral ligand for CD209/DC-SIGN and CLEC4M/DC-SIGNR, which are respectively found on dendritic cells (DCs), and on liver sinusoidal endothelial cells and macrophage-like cells of lymph node sinuses. These interactions allow the capture of circulating HCV particles by these cells and subsequent transmission to permissive cells. Capture of circulating HCV particles by these SIGN+ cells may facilitate virus infection of proximal hepatocytes and lymphocyte subpopulations and may be essential for the establishment of persistent infection. In terms of biological role, ion channel protein that acts as a viroporin and plays an essential role in the assembly, envelopment and secretion of viral particles. Regulates the host cell secretory pathway, which induces the intracellular retention of viral glycoproteins and favors assembly of viral particles. Creates a pore in acidic organelles and releases Ca(2+) and H(+) in the cytoplasm of infected cells, leading to a productive viral infection. High levels of cytoplasmic Ca(2+) may trigger membrane trafficking and transport of viral ER-associated proteins to viroplasms, sites of viral genome replication. This ionic imbalance induces the assembly of the inflammasome complex, which triggers the maturation of pro-IL-1beta into IL-1beta through the action of caspase-1. Targets also host mitochondria and induces mitochondrial depolarization. In addition of its role as a viroporin, acts as a lipid raft adhesion factor. Cysteine protease required for the proteolytic auto-cleavage between the non-structural proteins NS2 and NS3. The N-terminus of NS3 is required for the function of NS2 protease (active region NS2-3). Promotes the initiation of viral particle assembly by mediating the interaction between structural and non-structural proteins. Its function is as follows. Displays three enzymatic activities: serine protease with a chymotrypsin-like fold, NTPase and RNA helicase. NS3 serine protease, in association with NS4A, is responsible for the cleavages of NS3-NS4A, NS4A-NS4B, NS4B-NS5A and NS5A-NS5B. The NS3/NS4A complex prevents phosphorylation of host IRF3, thus preventing the establishment of dsRNA induced antiviral state. The NS3/NS4A complex induces host amino acid transporter component SLC3A2, thus contributing to HCV propagation. NS3 RNA helicase binds to RNA and unwinds both dsDNA and dsRNA in the 3' to 5' direction, and likely resolves RNA complicated stable secondary structures in the template strand. Binds a single ATP and catalyzes the unzipping of a single base pair of dsRNA. Inhibits host antiviral proteins TBK1 and IRF3 thereby preventing the establishment of an antiviral state. Cleaves host MAVS/CARDIF thereby preventing the establishment of an antiviral state. Cleaves host TICAM1/TRIF, thereby disrupting TLR3 signaling and preventing the establishment of an antiviral state. Functionally, induces a specific membrane alteration that serves as a scaffold for the virus replication complex. This membrane alteration gives rise to the so-called ER-derived membranous web that contains the replication complex. NS4B self-interaction contributes to its function in membranous web formation. Promotes host TRIF protein degradation in a CASP8-dependent manner thereby inhibiting host TLR3-mediated interferon signaling. Disrupts the interaction between STING and TBK1 contributing to the inhibition of interferon signaling. In terms of biological role, phosphorylated protein that is indispensable for viral replication and assembly. Both hypo- and hyperphosphorylated states are required for the viral life cycle. The hyperphosphorylated form of NS5A is an inhibitor of viral replication. Involved in RNA-binding and especially in binding to the viral genome. Zinc is essential for RNA-binding. Participates in the viral particle production as a result of its interaction with the mature viral core protein. Its interaction with host VAPB may target the viral replication complex to vesicles. Down-regulates viral IRES translation initiation. Mediates interferon resistance, presumably by interacting with and inhibiting host EIF2AK2/PKR. Prevents BIN1-induced apoptosis. Acts as a transcriptional activator of some host genes important for viral replication when localized in the nucleus. Via the interaction with host PACSIN2, modulates lipid droplet formation in order to promote virion assembly. Modulates TNFRSF21/DR6 signaling pathway for viral propagation. RNA-dependent RNA polymerase that performs primer-template recognition and RNA synthesis during viral replication. Initiates RNA transcription/replication at a flavin adenine dinucleotide (FAD), resulting in a 5'- FAD cap on viral RNAs. In this way, recognition of viral 5' RNA by host pattern recognition receptors can be bypassed, thereby evading activation of antiviral pathways. The chain is Genome polyprotein from Hepatitis C virus genotype 1b (strain HC-J4) (HCV).